A 141-amino-acid chain; its full sequence is Large ribosomal subunit protein uL16 (141 aa).

Positions Met1–Arg23 are disordered.

Belongs to the universal ribosomal protein uL16 family. As to quaternary structure, part of the 50S ribosomal subunit.

Functionally, binds 23S rRNA and is also seen to make contacts with the A and possibly P site tRNAs. This is Large ribosomal subunit protein uL16 from Helicobacter pylori (strain P12).